Consider the following 659-residue polypeptide: A-type ATP synthase subunit I (659 aa).

The next 8 helical transmembrane spans lie at 376–396 (FFFGFMLTDFVYGLLLGVISA), 415–435 (IMLWASAFTMVLGILFGSYCG), 460–480 (VMALAIGLGHLFTGYILGFIV), 489–509 (AAILEQLPWVFIIIGITLFAL), 513–533 (LGIPQIAFKAVFGVGLALFVV), 542–562 (MAVLLTISDFFGFIGNWLSYA), 566–586 (ALALATSGIALVINIIANMVW), and 590–610 (IGPIPLGILIGIVILIGGHIF).

This sequence belongs to the V-ATPase 116 kDa subunit family. Has multiple subunits with at least A(3), B(3), C, D, E, F, H, I and proteolipid K(x).

The protein resides in the cell membrane. In terms of biological role, component of the A-type ATP synthase that produces ATP from ADP in the presence of a proton gradient across the membrane. The polypeptide is A-type ATP synthase subunit I (Pyrococcus abyssi (strain GE5 / Orsay)).